The sequence spans 847 residues: E4 SUMO-protein ligase PIAL1 (847 aa).

Residues 113-271 (VNSPVTLISQ…EVVGSNSDCD (159 aa)) form an interacting domain (IND), required for interaction with MOM1 and PIAL2 region. The segment at 268-349 (SDCDIIEGPS…LRKILEEVGR (82 aa)) adopts an SP-RING-type zinc-finger fold. Zn(2+) contacts are provided by Cys-299, His-301, Cys-322, and Cys-325. 7 tandem repeats follow at residues 569-591 (QRPV…ENAD), 592-614 (QRWM…GNTN), 615-637 (QRPI…GNTD), 638-659 (HRST…GNAD), 660-682 (QRPM…GYAH), 683-705 (QRPM…GTPD), and 706-728 (QRPM…GTTD). The interval 569–728 (QRPVPSYIAH…LPVSYGGTTD (160 aa)) is 7 X 23 AA approximate tandem repeats.

Belongs to the PIAL protein ligase family. Homodimer. Interacts with MOM1 and PIAL2 to form a high molecular mass complex which mediates transcriptional gene silencing at heterochromatin regions. Expressed in leaves, stems and flowers, and, at low levels, in siliques and old leaves.

The protein localises to the nucleus. It functions in the pathway protein modification; protein sumoylation. Functionally, together with MOM1 and PIAL2, regulates transcriptional gene silencing (TGS) independently of changes in DNA methylation. E4-type SUMO ligase that promotes SUMO chain formation in a SCE1-dependent manner and thus contributes to a pathway for proteolytic removal of sumoylation substrates. Involved in stress responses (e.g. osmotic, salt and abscisic acid ABA) and sulfur metabolism. The protein is E4 SUMO-protein ligase PIAL1 of Arabidopsis thaliana (Mouse-ear cress).